Consider the following 602-residue polypeptide: MHSKVTIICIRFLFWFLLLCMLIGKSHTEDDIIIATKNGKVRGMNLTVFGGTVTAFLGIPYAQPPLGRLRFKKPQSLTKWSDIWNATKYANSCCQNIDQSFPGFHGSEMWNPNTDLSEDCLYLNVWIPAPKPKNATVLIWIYGGGFQTGTSSLHVYDGKFLARVERVIVVSMNYRVGALGFLALPGNPEAPGNMGLFDQQLALQWVQKNIAAFGGNPKSVTLFGESAGAASVSLHLLSPGSHSLFTRAILQSGSFNAPWAVTSLYEARNRTLNLAKLTGCSRENETEIIKCLRNKDPQEILLNEAFVVPYGTPLSVNFGPTVDGDFLTDMPDILLELGQFKKTQILVGVNKDEGTAFLVYGAPGFSKDNNSIITRKEFQEGLKIFFPGVSEFGKESILFHYTDWVDDQRPENYREALGDVVGDYNFICPALEFTKKFSEWGNNAFFYYFEHRSSKLPWPEWMGVMHGYEIEFVFGLPLERRDNYTKAEEILSRSIVKRWANFAKYGNPNETQNNSTSWPVFKSTEQKYLTLNTESTRIMTKLRAQQCRFWTSFFPKVLEMTGNIDEAEWEWKAGFHRWNNYMMDWKNQFNDYTSKKESCVGL.

An N-terminal signal peptide occupies residues 1–28 (MHSKVTIICIRFLFWFLLLCMLIGKSHT). Residues Asn45 and Asn85 are each glycosylated (N-linked (GlcNAc...) (complex) asparagine). Cys93 and Cys120 are disulfide-bonded. Residue Trp110 coordinates tacrine. Asn134 is a glycosylation site (N-linked (GlcNAc...) (complex) asparagine). Position 144–145 (144–145 (GG)) interacts with substrate. Ser226 acts as the Acyl-ester intermediate in catalysis. Residue Ser226 is modified to Phosphoserine. N-linked (GlcNAc...) (complex) asparagine glycosylation is found at Asn269 and Asn284. Cysteines 280 and 291 form a disulfide. Glu353 serves as the catalytic Charge relay system. N-linked (GlcNAc...) (complex) asparagine glycosylation occurs at Asn369. Cys428 and Cys547 are oxidised to a cystine. His466 is a binding site for tacrine. Catalysis depends on His466, which acts as the Charge relay system. Residue Asn483 is glycosylated (N-linked (GlcNAc...) (complex) asparagine). Asn509, Asn513, and Asn514 each carry an N-linked (GlcNAc...) asparagine glycan.

Belongs to the type-B carboxylesterase/lipase family. Homotetramer; disulfide-linked. Dimer of dimers. In terms of processing, N-glycosylated. No other PTM detected. The major N-glycan structures are of the complex diantennary type with 1 and 2 N-acetylneuraminic acid molecules (Neu5Ac) making up approximately 33% and 47% of the total N-glycans, respectively. Only low amounts of fucosylated diantennary N-glycans are detected (approximately 2%). Triantennary N-glycans with or without fucose amount to approximately 13%, whereas 5% of the total N-glycans are of the oligomannosidic or hybrid type. As to expression, detected in blood plasma (at protein level). Present in most cells except erythrocytes.

It localises to the secreted. It catalyses the reaction an acylcholine + H2O = a carboxylate + choline + H(+). With respect to regulation, inhibited by mercury. Inhibited by Tabun. Tabun forms a covalent adduct with Ser-226 that becomes irreversible upon aging. Its function is as follows. Esterase with broad substrate specificity. Contributes to the inactivation of the neurotransmitter acetylcholine. Can degrade neurotoxic organophosphate esters. The chain is Cholinesterase (BCHE) from Homo sapiens (Human).